A 256-amino-acid chain; its full sequence is Nuclear shuttle protein (256 aa).

The segment at 18–50 (VSRNQSSKRGTFVRRTDGKRRKGPSSKAHDEPK) is disordered. The Bipartite nuclear localization signal motif lies at 21-42 (NQSSKRGTFVRRTDGKRRKGPS). The short motif at 81–96 (VLGKIEPNRSRSYIKL) is the Nuclear localization signal element. The interaction with Arabidopsis thaliana NSI protein stretch occupies residues 150–187 (EIFGARIHSHGNLAITPGLKDRYYVLHVLKRVLSVEKD).

The protein belongs to the begomovirus nuclear shuttle protein family. As to quaternary structure, binds to single-stranded and double-stranded viral DNA. Interacts with the host nuclear shuttle interacting (NSI) protein. This interaction may allow NSP to recruit NSI monomers to the viral genome and thus regulate nuclear export of viral genome by NSP.

It is found in the host nucleus. It localises to the host cytoplasm. The protein localises to the host cell membrane. In terms of biological role, binds to the genomic viral ssDNA, shuttles it into and out of the cell nucleus. Begomoviruses use 2 proteins to transport their DNA from cell to cell. The nuclear shuttle protein (NSP) shuttles it between nucleus and cytoplasm and the movement protein (MP) probably transports the DNA-NSP complex to the cell periphery and facilitates movement across the cell wall. In Brassica oleracea (Wild cabbage), this protein is Nuclear shuttle protein.